Consider the following 325-residue polypeptide: Hydroxymethylglutaryl-CoA lyase, mitochondrial (325 aa).

A mitochondrion-targeting transit peptide spans 1–27 (MASVRKAFPRRLVGLTSLRAVSTSSMG). One can recognise a Pyruvate carboxyltransferase domain in the interval 33–300 (VKIVEVGPRD…HTGVNLQKLL (268 aa)). Arg41 provides a ligand contact to substrate. Asp42 contributes to the a divalent metal cation binding site. Residue Lys48 is modified to N6-acetyllysine; alternate. At Lys48 the chain carries N6-succinyllysine; alternate. Lys111 is modified (N6-acetyllysine). An N6-acetyllysine; alternate mark is found at Lys137 and Lys179. 2 positions are modified to N6-succinyllysine; alternate: Lys137 and Lys179. The a divalent metal cation site is built by His233 and His235. Cys266 is an active-site residue. Asn275 serves as a coordination point for a divalent metal cation. A Microbody targeting signal motif is present at residues 323 to 325 (CKL). Lys324 is modified (N6-acetyllysine).

It belongs to the HMG-CoA lyase family. Homodimer; disulfide-linked. Can also form homotetramers.

It is found in the mitochondrion matrix. The protein resides in the peroxisome. The enzyme catalyses (3S)-3-hydroxy-3-methylglutaryl-CoA = acetoacetate + acetyl-CoA. The protein operates within metabolic intermediate metabolism; (S)-3-hydroxy-3-methylglutaryl-CoA degradation; acetoacetate from (S)-3-hydroxy-3-methylglutaryl-CoA: step 1/1. In terms of biological role, mitochondrial 3-hydroxy-3-methylglutaryl-CoA lyase that catalyzes a cation-dependent cleavage of (S)-3-hydroxy-3-methylglutaryl-CoA into acetyl-CoA and acetoacetate, a key step in ketogenesis. Terminal step in leucine catabolism. Ketone bodies (beta-hydroxybutyrate, acetoacetate and acetone) are essential as an alternative source of energy to glucose, as lipid precursors and as regulators of metabolism. In Mus musculus (Mouse), this protein is Hydroxymethylglutaryl-CoA lyase, mitochondrial (Hmgcl).